The following is a 230-amino-acid chain: Chalcone--flavanone isomerase (230 aa).

Substrate-binding residues include threonine 52, asparagine 117, and serine 194.

The protein belongs to the chalcone isomerase family.

The enzyme catalyses a chalcone = a flavanone.. It participates in secondary metabolite biosynthesis; flavonoid biosynthesis. Catalyzes the intramolecular cyclization of bicyclic chalcones into tricyclic (S)-flavanones. Responsible for the isomerization of 4,2',4',6'-tetrahydroxychalcone (also termed chalcone) into naringenin. The sequence is that of Chalcone--flavanone isomerase (CHI) from Camellia sinensis (Tea plant).